A 211-amino-acid polypeptide reads, in one-letter code: Uridine kinase (211 aa).

12–19 serves as a coordination point for ATP; sequence GGTGSGKT.

This sequence belongs to the uridine kinase family.

It localises to the cytoplasm. The catalysed reaction is uridine + ATP = UMP + ADP + H(+). It carries out the reaction cytidine + ATP = CMP + ADP + H(+). It participates in pyrimidine metabolism; CTP biosynthesis via salvage pathway; CTP from cytidine: step 1/3. Its pathway is pyrimidine metabolism; UMP biosynthesis via salvage pathway; UMP from uridine: step 1/1. The sequence is that of Uridine kinase from Halalkalibacterium halodurans (strain ATCC BAA-125 / DSM 18197 / FERM 7344 / JCM 9153 / C-125) (Bacillus halodurans).